The chain runs to 395 residues: Synaptotagmin-8 (395 aa).

At 1 to 44 the chain is on the extracellular side; the sequence is MQADRSMKMGHALNPFSTSAPLDATAGPSLIPDLITRIPWPRWT. The chain crosses the membrane as a helical; Signal-anchor for type III membrane protein span at residues 45-65; it reads LFIAILAAGVLLVSCLLCVIC. The Cytoplasmic portion of the chain corresponds to 66–395; it reads CYCHRHRHRK…PRLPLLRPRS (330 aa). 2 C2 domains span residues 113 to 229 and 241 to 370; these read QWGR…ESWY and QMGE…AQWH.

Belongs to the synaptotagmin family. Homodimer or homooligomer. Homodimerization and homooligomerization do not depend on Ca(2+). Interacts with SYNCRIP isoform 2 C-terminus. Binds inositol 1,3,4,5-tetrakisphosphate (IP4). Binds to AP2 in a Ca(2+)-independent manner. Interacts with STX1A, STX1B and STX2; the interaction is Ca(2+)-dependent. Ubiquitous. Detected in testis and brain. Expressed in primary neurons, neuroendocrine and endocrine cells.

Its subcellular location is the cytoplasm. The protein resides in the cell membrane. It localises to the cytoplasmic vesicle. The protein localises to the secretory vesicle. It is found in the acrosome. In terms of biological role, involved in the trafficking and exocytosis of secretory vesicles in non-neuronal tissues. Mediates Ca(2+)-regulation of exocytosis acrosomal reaction in sperm. May mediate Ca(2+)-regulation of exocytosis in insulin secreted cells. In Mus musculus (Mouse), this protein is Synaptotagmin-8 (Syt8).